Here is a 152-residue protein sequence, read N- to C-terminus: Arginine repressor (152 aa).

The protein belongs to the ArgR family.

The protein localises to the cytoplasm. It participates in amino-acid biosynthesis; L-arginine biosynthesis [regulation]. Regulates arginine biosynthesis genes. This is Arginine repressor from Lachnoclostridium phytofermentans (strain ATCC 700394 / DSM 18823 / ISDg) (Clostridium phytofermentans).